The following is a 513-amino-acid chain: GMP synthase [glutamine-hydrolyzing] (513 aa).

Residues 3–200 (SVLVLDFGSQ…LIDIAGITPD (198 aa)) form the Glutamine amidotransferase type-1 domain. The active-site Nucleophile is the C80. Active-site residues include H174 and E176. One can recognise a GMPS ATP-PPase domain in the interval 201 to 388 (WSPKHFIDHQ…LGIAEDILMR (188 aa)). An ATP-binding site is contributed by 228–234 (SGGVDSS).

As to quaternary structure, homodimer.

It carries out the reaction XMP + L-glutamine + ATP + H2O = GMP + L-glutamate + AMP + diphosphate + 2 H(+). It functions in the pathway purine metabolism; GMP biosynthesis; GMP from XMP (L-Gln route): step 1/1. Functionally, catalyzes the synthesis of GMP from XMP. The protein is GMP synthase [glutamine-hydrolyzing] of Chlorobium limicola (strain DSM 245 / NBRC 103803 / 6330).